The sequence spans 339 residues: Chromo domain-containing protein cec-3 (339 aa).

Residues 1 to 21 are disordered; the sequence is MSNEGSREESREPEAREGKSD. Residues 24–84 form the Chromo domain; that stretch reads FEVEKILAHK…KLKVTDKTEL (61 aa). The segment covering 91-105 has biased composition (basic residues); it reads QIKKNKSQKSKKRSK. Disordered stretches follow at residues 91 to 199 and 215 to 272; these read QIKK…APLS and EEKA…QRTL. Composition is skewed to basic and acidic residues over residues 106–117 and 171–183; these read TVSDHESNHDSD and AAMEVRDTRRNWL. Residues 184–193 show a composition bias toward acidic residues; the sequence is DEESSDDEAE. The segment covering 230 to 241 has biased composition (basic and acidic residues); it reads KPREVVIKKDPS. Over residues 242–251 the composition is skewed to low complexity; the sequence is ESPVASASSV.

As to expression, expressed in every cell of the embryo (at protein level). In adults, expressed predominantly in the head region and the germline.

It is found in the chromosome. The protein resides in the nucleus. Specifically recognizes and binds methylated 'Lys-9' of histone H3 (H3K9me), with highest preference for trimethylated 'Lys-9' (H3K9me3) followed by dimethylated 'Lys-9' (H3K9me2) followed by monomethylated 'Lys-9' (H3K9me1). Plays a role in maintaining correct unc-4 expression in the VC motor neurons where unc-4 is expressed in the vulval but not in the non-vulval VC neurons. The chain is Chromo domain-containing protein cec-3 (cec-3) from Caenorhabditis elegans.